A 378-amino-acid polypeptide reads, in one-letter code: Glutamate 5-kinase (378 aa).

Lysine 20 lines the ATP pocket. Substrate is bound by residues serine 60, aspartate 147, and asparagine 159. ATP-binding positions include 179 to 180 and 221 to 227; these read TD and TGGMLTK. The PUA domain maps to 286-364; it reads RGRVVLDDGA…SQIARILGSM (79 aa).

It belongs to the glutamate 5-kinase family.

The protein resides in the cytoplasm. It catalyses the reaction L-glutamate + ATP = L-glutamyl 5-phosphate + ADP. It functions in the pathway amino-acid biosynthesis; L-proline biosynthesis; L-glutamate 5-semialdehyde from L-glutamate: step 1/2. Its function is as follows. Catalyzes the transfer of a phosphate group to glutamate to form L-glutamate 5-phosphate. The chain is Glutamate 5-kinase from Bordetella pertussis (strain Tohama I / ATCC BAA-589 / NCTC 13251).